The following is a 128-amino-acid chain: Arsenic resistance transcriptional regulator ArsR1 (128 aa).

An HTH arsR-type domain is found at 11–103; it reads MREILTPPIV…AMLKGVVDAN (93 aa). Arsenite contacts are provided by cysteine 43 and cysteine 45. Positions 44–67 form a DNA-binding region, H-T-H motif; it reads VCELTHALELSQPKISRHLAQLRE.

As to quaternary structure, homodimer.

It is found in the cytoplasm. Functionally, binds arsenite and regulates the expression of arsenic efflux pumps. In vitro, also binds antimony and bismuth, but not arsenate. This is Arsenic resistance transcriptional regulator ArsR1 from Pseudomonas putida (strain ATCC 47054 / DSM 6125 / CFBP 8728 / NCIMB 11950 / KT2440).